Reading from the N-terminus, the 689-residue chain is Beta-galactosidase Pbg (689 aa).

Residue Arg-118 participates in substrate binding. Cys-122 serves as a coordination point for Zn(2+). Asn-156 is a binding site for substrate. Catalysis depends on Glu-157, which acts as the Proton donor. Zn(2+)-binding residues include Cys-162, Cys-164, and Cys-167. Glu-318 acts as the Nucleophile in catalysis. Residues Trp-326 and 366–369 (EKFH) each bind substrate.

Belongs to the glycosyl hydrolase 42 family.

It catalyses the reaction Hydrolysis of terminal non-reducing beta-D-galactose residues in beta-D-galactosides.. The chain is Beta-galactosidase Pbg from Clostridium perfringens (strain ATCC 13124 / DSM 756 / JCM 1290 / NCIMB 6125 / NCTC 8237 / Type A).